Consider the following 189-residue polypeptide: MSEIKMPEFLTVESALKDSGLAVTPSELHGLLVGMISGGLSLDDQTWKPLIYDYTNDGMGWPDSAIKVGSAVFQCTVAELTAEKLALELLIPSEKESLMNRADGLSEWVNHFISGLGLVELKLDKTSDALKEALADLEEIARLGIDEEDDLEEQESLFEQIVEHVRICVLTIHAELGQQIHTDASKTVH.

Belongs to the UPF0149 family.

The polypeptide is UPF0149 protein VF_2102 (Aliivibrio fischeri (strain ATCC 700601 / ES114) (Vibrio fischeri)).